A 289-amino-acid polypeptide reads, in one-letter code: NFIL3 like protein (289 aa).

A disordered region spans residues 1–27; the sequence is MDVGFSGLPDVSQSHSKTLWGARGRGP. The bZIP domain maps to 42-105; that stretch reads DTVYWEKRRK…GLLPLTGGPR (64 aa). The interval 48–64 is basic motif; the sequence is KRRKNNEAAKRSREKRR. The tract at residues 70–91 is leucine-zipper; sequence IEGRLAALMEENALLKGELKAL.

Belongs to the bZIP family. NFIL3 subfamily.

It localises to the nucleus. This is NFIL3 like protein from Homo sapiens (Human).